We begin with the raw amino-acid sequence, 217 residues long: uncharacterized protein (217 aa).

The protein to M.tuberculosis Rv2926c.

This is an uncharacterized protein from Mycobacterium leprae (strain TN).